The chain runs to 715 residues: Beta-galactosidase 9 (715 aa).

The signal sequence occupies residues 1 to 20 (MSGGAVAFLLLVAAAAVANA). The Proton donor role is filled by Glu178. Glu247 functions as the Nucleophile in the catalytic mechanism.

The protein belongs to the glycosyl hydrolase 35 family.

The protein localises to the secreted. It is found in the extracellular space. Its subcellular location is the apoplast. It catalyses the reaction Hydrolysis of terminal non-reducing beta-D-galactose residues in beta-D-galactosides.. The protein is Beta-galactosidase 9 of Oryza sativa subsp. japonica (Rice).